The sequence spans 453 residues: Carbamoyl phosphate synthase arginine-specific small chain (453 aa).

Residues 1-28 (MFARVFKAMPARASALTSVNASIQARFM) constitute a mitochondrion transit peptide. Residues 219–406 (HVAVIDCGVK…IDSVKKYKAS (188 aa)) form the Glutamine amidotransferase type-1 domain. Cys-295 (nucleophile) is an active-site residue. Active-site residues include His-379 and Glu-381.

It belongs to the CarA family. As to quaternary structure, heterodimer composed of 2 chains; the small (or glutamine) chain promotes the hydrolysis of glutamine to ammonia, which is used by the large (or ammonia) chain to synthesize carbamoyl phosphate.

The protein localises to the mitochondrion matrix. The catalysed reaction is hydrogencarbonate + L-glutamine + 2 ATP + H2O = carbamoyl phosphate + L-glutamate + 2 ADP + phosphate + 2 H(+). It catalyses the reaction L-glutamine + H2O = L-glutamate + NH4(+). Its pathway is amino-acid biosynthesis; L-arginine biosynthesis; carbamoyl phosphate from bicarbonate: step 1/1. In terms of biological role, small subunit of the arginine-specific carbamoyl phosphate synthase (CPSase). CPSase catalyzes the formation of carbamoyl phosphate from the ammonia moiety of glutamine, carbonate, and phosphate donated by ATP, the first step of the arginine biosynthetic pathway. The small subunit (glutamine amidotransferase) binds and cleaves glutamine to supply the large subunit with the substrate ammonia. The sequence is that of Carbamoyl phosphate synthase arginine-specific small chain (cpa1) from Neosartorya fischeri (strain ATCC 1020 / DSM 3700 / CBS 544.65 / FGSC A1164 / JCM 1740 / NRRL 181 / WB 181) (Aspergillus fischerianus).